A 426-amino-acid chain; its full sequence is MVDTESQKEKNHLNHKIYLDYNATTPPAREVVGTVAEALQEAWGNPSSSYTAGCKAKELIDTARARIAKMVGGKPEDIIFTSGGTEANNMVLFSAVENFNRTSKERQNNNVDWALPHIITSNVEHDSVALPLLQLQKTHKAEITFVPVSTVTGRVEVEDVISAVRPNTCLVSIMLANNETGVIMPVGELSQCLASLSRKRSAQGLPEILLHTDAAQALGKVEVDVQELGVNYLTIVGHKFYGPRIGALYVGGLGHQSPLLPMLYGGGREGNFRPGTENTPMIAGLGQAAELVSLHCAAYEVHMRRIRDYLEQKLEAVFGDRIRLNSRFPGAERLPNTCNVSLLKPAVLGREWLSHCQYLQASVGAACHSDRGDSPSPVLLKSGVPQDAARSAVRLSVGRETSQDDVDLIVRDLEQAAQLLGMNKQS.

N6-(pyridoxal phosphate)lysine is present on Lys-239. The S-selanylcysteine intermediate role is filled by Cys-367.

Belongs to the class-V pyridoxal-phosphate-dependent aminotransferase family. Homodimer. It depends on pyridoxal 5'-phosphate as a cofactor.

It localises to the cytoplasm. The protein localises to the cytosol. It catalyses the reaction L-selenocysteine + AH2 = hydrogenselenide + L-alanine + A + H(+). In terms of biological role, catalyzes the decomposition of L-selenocysteine to L-alanine and elemental selenium. This is Selenocysteine lyase (scly) from Xenopus laevis (African clawed frog).